We begin with the raw amino-acid sequence, 253 residues long: MSVVSMKQLLEAGVHFGHQTRRWDPKMKPYIFTQRNDIYIIDLQKTIKMLDDAYNYVKAVAQDDGVFLFVGTKKQAQEAIAEEATRAGQYYVNQRWLGGTLTNWTTIQSRVKRLKDLKKMAEDGTFDVLPKKEVSLLTKEMDKLQKFLGGIEDMPRIPDVMFVVDPKKEKIAVHEANKLGIPVVAMVDTNTDPTPIDVIIPSNDDAIRAIRLIAGTMADAVIEGKQGADNADVEKELSESVEENSAEEVDDAE.

The tract at residues glutamine 226–glutamate 253 is disordered. Acidic residues predominate over residues glutamate 239–glutamate 253.

The protein belongs to the universal ribosomal protein uS2 family.

This Lactobacillus delbrueckii subsp. bulgaricus (strain ATCC 11842 / DSM 20081 / BCRC 10696 / JCM 1002 / NBRC 13953 / NCIMB 11778 / NCTC 12712 / WDCM 00102 / Lb 14) protein is Small ribosomal subunit protein uS2.